Here is a 384-residue protein sequence, read N- to C-terminus: Conidiophore development protein hymA (384 aa).

Residues 362 to 374 are compositionally biased toward basic and acidic residues; sequence EPIEPSRSAREPS. The tract at residues 362–384 is disordered; sequence EPIEPSRSAREPSRSTANTTTVA.

Belongs to the Mo25 family.

It is found in the cytoplasm. Its function is as follows. Required for conidiophore development. This is Conidiophore development protein hymA (hymA) from Emericella nidulans (strain FGSC A4 / ATCC 38163 / CBS 112.46 / NRRL 194 / M139) (Aspergillus nidulans).